The sequence spans 98 residues: Peptides MS9.1 (98 aa).

Positions 1 to 21 (MKQSLILAVLCLALVFATIEA) are cleaved as a signal peptide. A propeptide spanning residues 22–27 (KPKADP) is cleaved from the precursor. 2 cysteine pairs are disulfide-bonded: C34–C46 and C37–C52. 2 consecutive propeptides follow at residues 63–64 (DP) and 92–98 (DPVRDAE).

The protein belongs to the sea anemone BBH family.

It localises to the secreted. The protein resides in the nematocyst. Its function is as follows. Acts as a positive modulator of mammalian TRPA1, a non-selective cation channel involved in detection of pain, in vitro yet has an analgesic and anti-inflammatory effect in vivo. The sequence is that of Peptides MS9.1 from Metridium senile (Brown sea anemone).